Reading from the N-terminus, the 388-residue chain is Chorismate synthase (388 aa).

NADP(+)-binding residues include Arg39 and Arg45. Residues 130–132 (RSS), 251–252 (NA), Gly296, 311–315 (KPIPT), and Arg337 each bind FMN.

The protein belongs to the chorismate synthase family. As to quaternary structure, homotetramer. It depends on FMNH2 as a cofactor.

The catalysed reaction is 5-O-(1-carboxyvinyl)-3-phosphoshikimate = chorismate + phosphate. It functions in the pathway metabolic intermediate biosynthesis; chorismate biosynthesis; chorismate from D-erythrose 4-phosphate and phosphoenolpyruvate: step 7/7. In terms of biological role, catalyzes the anti-1,4-elimination of the C-3 phosphate and the C-6 proR hydrogen from 5-enolpyruvylshikimate-3-phosphate (EPSP) to yield chorismate, which is the branch point compound that serves as the starting substrate for the three terminal pathways of aromatic amino acid biosynthesis. This reaction introduces a second double bond into the aromatic ring system. This chain is Chorismate synthase, found in Streptococcus pneumoniae (strain ATCC 700669 / Spain 23F-1).